Here is a 276-residue protein sequence, read N- to C-terminus: Secreted RxLR effector protein 120 (276 aa).

The signal sequence occupies residues 1-21 (MRGAYYVITALLVVASSQTSA). A RxLR-dEER motif is present at residues 48 to 65 (QSLRGSRDVPDDLAHEER). Residues 97 to 130 (GKRPRVAEKDALEKASGADEASKKPRNTATDDAF) are disordered. Residues 101–119 (RVAEKDALEKASGADEASK) show a composition bias toward basic and acidic residues.

The protein belongs to the RxLR effector family.

The protein localises to the secreted. The protein resides in the host nucleus. Its function is as follows. Secreted effector that completely suppresses the host cell death induced by cell death-inducing proteins. The chain is Secreted RxLR effector protein 120 from Plasmopara viticola (Downy mildew of grapevine).